We begin with the raw amino-acid sequence, 161 residues long: Large ribosomal subunit protein bL17 (161 aa).

The segment at 126–161 (KVAKKATRTRRSKKTTEAAPAAEVPATEEPKAESAE) is disordered. Residues 129 to 138 (KKATRTRRSK) are compositionally biased toward basic residues. Low complexity predominate over residues 142–152 (EAAPAAEVPAT).

It belongs to the bacterial ribosomal protein bL17 family. Part of the 50S ribosomal subunit. Contacts protein L32.

This chain is Large ribosomal subunit protein bL17, found in Bacteroides fragilis (strain ATCC 25285 / DSM 2151 / CCUG 4856 / JCM 11019 / LMG 10263 / NCTC 9343 / Onslow / VPI 2553 / EN-2).